Consider the following 426-residue polypeptide: Histidine--tRNA ligase (426 aa).

It belongs to the class-II aminoacyl-tRNA synthetase family. In terms of assembly, homodimer.

The protein resides in the cytoplasm. The catalysed reaction is tRNA(His) + L-histidine + ATP = L-histidyl-tRNA(His) + AMP + diphosphate + H(+). The sequence is that of Histidine--tRNA ligase from Streptococcus agalactiae serotype Ia (strain ATCC 27591 / A909 / CDC SS700).